The sequence spans 444 residues: Elongation factor 1-alpha (444 aa).

The tr-type G domain occupies 15–236; it reads KPHLNLAVIG…ALDTFQPPPR (222 aa). Residues 24–31 are G1; it reads GHVDNGKS. GTP is bound at residue 24–31; sequence GHVDNGKS. Residue Ser-31 participates in Mg(2+) binding. The tract at residues 80 to 84 is G2; the sequence is GVTIE. The segment at 101-104 is G3; it reads DLPG. GTP is bound by residues 101–105 and 163–166; these read DLPGH and NKMD. The tract at residues 163-166 is G4; the sequence is NKMD. Residues 202-204 form a G5 region; that stretch reads SAI.

The protein belongs to the TRAFAC class translation factor GTPase superfamily. Classic translation factor GTPase family. EF-Tu/EF-1A subfamily.

It is found in the cytoplasm. The enzyme catalyses GTP + H2O = GDP + phosphate + H(+). GTP hydrolase that promotes the GTP-dependent binding of aminoacyl-tRNA to the A-site of ribosomes during protein biosynthesis. The polypeptide is Elongation factor 1-alpha (Pyrobaculum islandicum (strain DSM 4184 / JCM 9189 / GEO3)).